We begin with the raw amino-acid sequence, 309 residues long: MNRSDLLENPRTQTESGFLLIHKPVGMTSSDLVVTVRKKLGFKKVGHTGTLDRAASGLMILPIGSCTSFSSVFLEKEKSYEAWVKPGESTDSGDKEGEILESLSKEQTETWFQEHQEKLRNLFEQVPTWETQEAPEVSALKVNGRRRSDLFREGVALVPVVRKIKIYRYELGKFSPESISFQIRVSAGTYIRKIVMDISDRIGFPLRLEKLVRTSIGKLNLNQADSYESLLDGKIKIHPPETILDFPTVEVPDTEVRNVLNGRKIKLEWIPVNEFLLVSPEEEILAWCKKEEHGIHELDYKYLRVFPKN.

Residue D52 is the Nucleophile of the active site.

The protein belongs to the pseudouridine synthase TruB family. Type 1 subfamily.

The catalysed reaction is uridine(55) in tRNA = pseudouridine(55) in tRNA. Responsible for synthesis of pseudouridine from uracil-55 in the psi GC loop of transfer RNAs. The sequence is that of tRNA pseudouridine synthase B from Leptospira interrogans serogroup Icterohaemorrhagiae serovar Lai (strain 56601).